The following is a 295-amino-acid chain: Phosphatidylserine decarboxylase proenzyme (295 aa).

Catalysis depends on charge relay system; for autoendoproteolytic cleavage activity residues Asp90 and Ser258. Ser258 functions as the Schiff-base intermediate with substrate; via pyruvic acid; for decarboxylase activity in the catalytic mechanism. Position 258 is a pyruvic acid (Ser); by autocatalysis (Ser258).

The protein belongs to the phosphatidylserine decarboxylase family. PSD-B subfamily. Prokaryotic type I sub-subfamily. Heterodimer of a large membrane-associated beta subunit and a small pyruvoyl-containing alpha subunit. Requires pyruvate as cofactor. Post-translationally, is synthesized initially as an inactive proenzyme. Formation of the active enzyme involves a self-maturation process in which the active site pyruvoyl group is generated from an internal serine residue via an autocatalytic post-translational modification. Two non-identical subunits are generated from the proenzyme in this reaction, and the pyruvate is formed at the N-terminus of the alpha chain, which is derived from the carboxyl end of the proenzyme. The autoendoproteolytic cleavage occurs by a canonical serine protease mechanism, in which the side chain hydroxyl group of the serine supplies its oxygen atom to form the C-terminus of the beta chain, while the remainder of the serine residue undergoes an oxidative deamination to produce ammonia and the pyruvoyl prosthetic group on the alpha chain. During this reaction, the Ser that is part of the protease active site of the proenzyme becomes the pyruvoyl prosthetic group, which constitutes an essential element of the active site of the mature decarboxylase.

It localises to the cell membrane. It carries out the reaction a 1,2-diacyl-sn-glycero-3-phospho-L-serine + H(+) = a 1,2-diacyl-sn-glycero-3-phosphoethanolamine + CO2. Its pathway is phospholipid metabolism; phosphatidylethanolamine biosynthesis; phosphatidylethanolamine from CDP-diacylglycerol: step 2/2. Catalyzes the formation of phosphatidylethanolamine (PtdEtn) from phosphatidylserine (PtdSer). This Blochmanniella pennsylvanica (strain BPEN) protein is Phosphatidylserine decarboxylase proenzyme.